We begin with the raw amino-acid sequence, 343 residues long: Protein RecA (343 aa).

64 to 71 (GPESSGKT) contributes to the ATP binding site.

Belongs to the RecA family.

It localises to the cytoplasm. Its function is as follows. Can catalyze the hydrolysis of ATP in the presence of single-stranded DNA, the ATP-dependent uptake of single-stranded DNA by duplex DNA, and the ATP-dependent hybridization of homologous single-stranded DNAs. It interacts with LexA causing its activation and leading to its autocatalytic cleavage. This chain is Protein RecA, found in Acidiphilium cryptum (strain JF-5).